A 510-amino-acid chain; its full sequence is MNKELVLVVDFGGQYNQLIARRVRENRVYCEIVPYTTSIEDIKEKAPKGIIFTGGPNSVYGENAPRVQKELFDLGIPVLGICYGDQLMAHSLEGEVTSPEKREYGKTDVNLDNSSLLFKDMKEKDQCWMSHTDYISKVPKGFKIIATTDECPCAAMENAEKKLYGVQFHPEVEHTLFGKKMLKNFLFNVCNLKGDWSMSSFAEQQIKAIKEKVGDKKVICALSGGVDSSVAAVIVHKAIGKQLTCIFVDHGLLRKDEGDQVEKIFKDQFDMNLIRVNAQDRFLGKLKGVSDPERKRKIIGEEFIRVFEEEAKKLGDISFLVQGTIYPDIVESGTNTSATIKSHHNVGGLPEDMEFKLIEPLRELFKDEVRAVGEELGIPHKLVWRQPFPGPGLAIRVLGEVTEEKLAITREADAIFREEIAKAGLEEKIWQYFACLPNIQSVGVMGDERTYCHTIALRAVTSSDAMTSDWARIPYEVLDKVSRRIVNEVKEVNRIVYDVTSKPPATIEWE.

Residues 5-195 (LVLVVDFGGQ…LFNVCNLKGD (191 aa)) form the Glutamine amidotransferase type-1 domain. Cysteine 82 acts as the Nucleophile in catalysis. Active-site residues include histidine 169 and glutamate 171. Residues 196 to 385 (WSMSSFAEQQ…LGIPHKLVWR (190 aa)) form the GMPS ATP-PPase domain. 223 to 229 (SGGVDSS) contacts ATP.

As to quaternary structure, homodimer.

It catalyses the reaction XMP + L-glutamine + ATP + H2O = GMP + L-glutamate + AMP + diphosphate + 2 H(+). Its pathway is purine metabolism; GMP biosynthesis; GMP from XMP (L-Gln route): step 1/1. Functionally, catalyzes the synthesis of GMP from XMP. In Clostridium botulinum (strain Okra / Type B1), this protein is GMP synthase [glutamine-hydrolyzing].